The sequence spans 352 residues: MSKQQAQFTNPETPGYVGFANLPNQVHRKSVRKGFEFTLMVVGESGLGKSTLINSLFLTDLYPERVVPGAANKIERTVEIEASTVEIEERGVKLRLTVVDTPGYGDAMNCVDCFKPIISYVDNQFERYLHDESGLNRRHIVDNRVHCCFYFISPFGHGLKPLDVEFMKALHNKVNIVPVIAKADTLTLRERERLKRRVLDEIEERGIKIYHLPDAESDEDEDFKEQTRLLKASIPFTVVGSNQLIEAKGKKVRGRLYPWGVVEVENPEHNDFLKLRTMLITHMQDLQEVTQDLHYENFRSERLKKGGASKVENVEVTKDQMLQEKEAELRRMQEMIARMQAQMQIQSQSGDV.

Residues 33–305 (KGFEFTLMVV…ENFRSERLKK (273 aa)) form the Septin-type G domain. Positions 43–50 (GESGLGKS) are G1 motif. Residues 43–50 (GESGLGKS), Thr-77, Gly-103, 182–190 (KADTLTLRE), Gly-240, and Arg-255 contribute to the GTP site. Residues 100–103 (DTPG) are G3 motif. Residues 181-184 (AKAD) form a G4 motif region. An important for dimerization region spans residues 259 to 269 (WGVVEVENPEH).

This sequence belongs to the TRAFAC class TrmE-Era-EngA-EngB-Septin-like GTPase superfamily. Septin GTPase family. As to quaternary structure, septins polymerize into heterooligomeric protein complexes that form filaments, and associate with cellular membranes, actin filaments and microtubules. GTPase activity is required for filament formation. Can form heterooligomers with other family members and form filaments. Interacts with wdpcp.

It is found in the cytoplasm. The protein resides in the cytoskeleton. It localises to the spindle. The protein localises to the cleavage furrow. Its subcellular location is the midbody. It is found in the cell projection. The protein resides in the cilium membrane. Filament-forming cytoskeletal GTPase. Required for normal organization of the actin cytoskeleton. Plays a role in the biogenesis of polarized columnar-shaped epithelium. Required for the progression through mitosis through regulation of chromosome congression. During anaphase, may be required for chromosome segregation and spindle elongation. Probably plays a role in ciliogenesis and collective cell movements including convergent extension during gastrulation. In cilia, required for the integrity of the diffusion barrier at the base of the primary cilium that prevents diffusion of transmembrane proteins between the cilia and plasma membranes. Controls cell shape and not polarization of cells during convergent extension. This chain is Septin-2B (sept2-b), found in Xenopus laevis (African clawed frog).